A 294-amino-acid polypeptide reads, in one-letter code: N-acetylmuramic acid 6-phosphate etherase (294 aa).

The SIS domain maps to 54–217; that stretch reads VIQSFEEEGR…STASMIGVGK (164 aa). Residue Glu-82 is the Proton donor of the active site. Glu-113 is an active-site residue.

This sequence belongs to the GCKR-like family. MurNAc-6-P etherase subfamily. Homodimer.

The enzyme catalyses N-acetyl-D-muramate 6-phosphate + H2O = N-acetyl-D-glucosamine 6-phosphate + (R)-lactate. The protein operates within amino-sugar metabolism; N-acetylmuramate degradation. Its function is as follows. Specifically catalyzes the cleavage of the D-lactyl ether substituent of MurNAc 6-phosphate, producing GlcNAc 6-phosphate and D-lactate. The protein is N-acetylmuramic acid 6-phosphate etherase of Bacillus cereus (strain ZK / E33L).